A 296-amino-acid polypeptide reads, in one-letter code: Nucleotide-binding protein Pnuc_1915 (296 aa).

Position 8 to 15 (8 to 15 (GISGSGKS)) interacts with ATP. GTP is bound at residue 57-60 (DARR).

It belongs to the RapZ-like family.

Functionally, displays ATPase and GTPase activities. The polypeptide is Nucleotide-binding protein Pnuc_1915 (Polynucleobacter asymbioticus (strain DSM 18221 / CIP 109841 / QLW-P1DMWA-1) (Polynucleobacter necessarius subsp. asymbioticus)).